The chain runs to 218 residues: Adenylate kinase (218 aa).

ATP is bound at residue 10–15; that stretch reads GAGKGT. The interval 30–59 is NMP; it reads STGDMLRAAVKAGTPLGIEAKKVMDSGGLV. Residues Thr-31, Arg-36, 57–59, 85–88, and Gln-92 each bind AMP; these read GLV and GFPR. Positions 122 to 159 are LID; the sequence is GRRSHSASGRTYHVKYNPPKVEGLDDVTGEPLIQREDD. ATP-binding positions include Arg-123 and 132–133; that span reads TY. The AMP site is built by Arg-156 and Arg-167. Gly-203 provides a ligand contact to ATP.

This sequence belongs to the adenylate kinase family. In terms of assembly, monomer.

The protein resides in the cytoplasm. It catalyses the reaction AMP + ATP = 2 ADP. Its pathway is purine metabolism; AMP biosynthesis via salvage pathway; AMP from ADP: step 1/1. In terms of biological role, catalyzes the reversible transfer of the terminal phosphate group between ATP and AMP. Plays an important role in cellular energy homeostasis and in adenine nucleotide metabolism. This is Adenylate kinase from Polaromonas naphthalenivorans (strain CJ2).